Reading from the N-terminus, the 539-residue chain is Phenylacetyl-CoA ligase epaB (539 aa).

Arg188 to Lys199 is an AMP binding site. Residues Glu449 to Lys525 form an AMP-binding region.

Belongs to the ATP-dependent AMP-binding enzyme family.

It participates in secondary metabolite biosynthesis. In terms of biological role, phenylacetyl-CoA ligase; part of the gene cluster that mediates the biosynthesis of nigerpyrone and its derivatives carbonarone A and pestalamide A. The biosynthesis pathway begins with the polyketide assembly by epaA to form phenylacetyl triketide precursor from successive condensation of two malonyl-CoA, presumably with one phenylacetyl-CoA starter unit produced by the phenylacetyl-CoA ligase epaB. For the nigerpyrone biosynthesis, the reactive polyketide chain is released as an aldehyde through the R-domain. A nonenzymatic cyclization and dehydration may create nigerpyrone. For the biosynthesis of carbonarone A and pestalamide A, an extra methyl group is added through the C-methyltransferase domain. Several further steps involving the dehydrogenase orf1, the cytochrome P450 monooxygenase orf2 and the FAD-dependent monooxygenase orf3 are required to form a carbonarone A precursor which is converted to carbonarone A via cyclization. The O-acetyltransferase epaC could catalyze the transfer of 2-methylsuccinyl-CoA, a common intermediate in the ethylmalonyl-CoA pathway, to generate the final product pestalamide A. The chain is Phenylacetyl-CoA ligase epaB from Aspergillus niger (strain ATCC MYA-4892 / CBS 513.88 / FGSC A1513).